A 114-amino-acid chain; its full sequence is Large ribosomal subunit protein bL21 (114 aa).

Belongs to the bacterial ribosomal protein bL21 family. Part of the 50S ribosomal subunit. Contacts protein L20.

Functionally, this protein binds to 23S rRNA in the presence of protein L20. In Protochlamydia amoebophila (strain UWE25), this protein is Large ribosomal subunit protein bL21.